Here is a 166-residue protein sequence, read N- to C-terminus: Small ribosomal subunit protein uS4 (166 aa).

The S4 RNA-binding domain occupies 103–165; the sequence is RRLQTVVYKK…PTSPYFKKAQ (63 aa).

The protein belongs to the universal ribosomal protein uS4 family. In terms of assembly, part of the 30S ribosomal subunit. Contacts protein S5. The interaction surface between S4 and S5 is involved in control of translational fidelity.

Its function is as follows. One of the primary rRNA binding proteins, it binds directly to 16S rRNA where it nucleates assembly of the body of the 30S subunit. In terms of biological role, with S5 and S12 plays an important role in translational accuracy. This is Small ribosomal subunit protein uS4 from Ignicoccus hospitalis (strain KIN4/I / DSM 18386 / JCM 14125).